Here is a 150-residue protein sequence, read N- to C-terminus: Protein E6 (150 aa).

Zinc fingers lie at residues 31–67 and 104–140; these read CIWC…CAFC and CALC…CTHC.

It belongs to the papillomaviridae E6 protein family. Forms homodimers. Interacts with ubiquitin-protein ligase UBE3A/E6-AP; this interaction stimulates UBE3A ubiquitin activity. Interacts with host TP53 and EP300; this interaction inhibits TP53 activity.

It localises to the host cytoplasm. It is found in the host nucleus. Functionally, plays a major role in the induction and maintenance of cellular transformation. E6 associates with host UBE3A/E6-AP ubiquitin-protein ligase and modulates its activity. Sequesters tumor suppressor TP53 in the host cytoplasm and modulates its activity by interacting with host EP300 that results in the reduction of TP53 acetylation and activation. In turn, apoptosis induced by DNA damage is inhibited. E6 also protects host keratinocytes from apoptosis by mediating the degradation of host BAK1. May also inhibit host immune response. The protein is Protein E6 of Homo sapiens (Human).